Reading from the N-terminus, the 644-residue chain is 3D-(3,5/4)-trihydroxycyclohexane-1,2-dione hydrolase 2 (644 aa).

Residue glutamate 65 coordinates thiamine diphosphate. Residues 442–522 (SLPGDLQRMW…INVLLFDNSG (81 aa)) are thiamine pyrophosphate binding. Aspartate 493 and asparagine 520 together coordinate Mg(2+).

Belongs to the TPP enzyme family. Mg(2+) is required as a cofactor. Thiamine diphosphate serves as cofactor.

The catalysed reaction is 3D-3,5/4-trihydroxycyclohexane-1,2-dione + H2O = 5-deoxy-D-glucuronate + H(+). The protein operates within polyol metabolism; myo-inositol degradation into acetyl-CoA; acetyl-CoA from myo-inositol: step 3/7. Involved in the cleavage of the C1-C2 bond of 3D-(3,5/4)-trihydroxycyclohexane-1,2-dione (THcHDO) to yield 5-deoxy-glucuronate (5DG). The polypeptide is 3D-(3,5/4)-trihydroxycyclohexane-1,2-dione hydrolase 2 (Bacillus cereus (strain ZK / E33L)).